A 102-amino-acid polypeptide reads, in one-letter code: Small ribosomal subunit protein uS10 (102 aa).

The protein belongs to the universal ribosomal protein uS10 family. In terms of assembly, part of the 30S ribosomal subunit.

Its function is as follows. Involved in the binding of tRNA to the ribosomes. This Kineococcus radiotolerans (strain ATCC BAA-149 / DSM 14245 / SRS30216) protein is Small ribosomal subunit protein uS10.